The sequence spans 161 residues: Nucleotide-binding protein azo2183 (161 aa).

Belongs to the YajQ family.

Nucleotide-binding protein. The chain is Nucleotide-binding protein azo2183 from Azoarcus sp. (strain BH72).